A 602-amino-acid polypeptide reads, in one-letter code: DNA mismatch repair protein MutL (602 aa).

Residues 337-367 (KRPFPGSSTNYSGIQQDTKKQESDNPEKARG) form a disordered region. Positions 342-352 (GSSTNYSGIQQ) are enriched in polar residues. Over residues 353 to 367 (DTKKQESDNPEKARG) the composition is skewed to basic and acidic residues.

The protein belongs to the DNA mismatch repair MutL/HexB family.

Functionally, this protein is involved in the repair of mismatches in DNA. It is required for dam-dependent methyl-directed DNA mismatch repair. May act as a 'molecular matchmaker', a protein that promotes the formation of a stable complex between two or more DNA-binding proteins in an ATP-dependent manner without itself being part of a final effector complex. This is DNA mismatch repair protein MutL from Kosmotoga olearia (strain ATCC BAA-1733 / DSM 21960 / TBF 19.5.1).